A 217-amino-acid chain; its full sequence is C-type lectin domain family 2 member I (217 aa).

Residues 1–53 lie on the Cytoplasmic side of the membrane; sequence MPDCLETGEKLFVHNMNAQCVQKPEEGNGPLGTGGKIVQGKCFRIISTVSPVK. The chain crosses the membrane as a helical; Signal-anchor for type II membrane protein span at residues 54–74; the sequence is LYCCYGVIMVLTVAVIALSVA. At 75 to 217 the chain is on the extracellular side; sequence LSTKKTEQII…YNLHCQTPPV (143 aa). Cys92 and Cys103 are oxidised to a cystine. In terms of domain architecture, C-type lectin spans 99-203; that stretch reads VGNKCFYFSG…SYINRMWICS (105 aa). Asn112 carries an N-linked (GlcNAc...) asparagine glycan. Residues Cys120 and Cys202 are joined by a disulfide bond.

Detected in osteoblasts, growth plate chondrocytes and skeletal muscle overlying the bone (at protein level). Detected in spleen, B-cells, dendritic cells, thymus, and in IL2-activated natural killer cells.

The protein resides in the cell membrane. Inhibits osteoclast formation. Receptor for KLRB1F. Enhances T-cell activation. Plays a role in splenocyte activation, T-cell responses and IL-2 production. This is C-type lectin domain family 2 member I (Clec2i) from Mus musculus (Mouse).